The primary structure comprises 247 residues: Probable transcriptional regulatory protein PC1_1817 (247 aa).

The protein belongs to the TACO1 family.

It is found in the cytoplasm. In Pectobacterium carotovorum subsp. carotovorum (strain PC1), this protein is Probable transcriptional regulatory protein PC1_1817.